Reading from the N-terminus, the 479-residue chain is Fibrinogen beta chain (479 aa).

The N-terminal stretch at 1 to 18 (MRHLWLLLLSVSLVQTQA) is a signal peptide. The tract at residues 20-82 (TTDSDKVDLS…VERKPPDAGG (63 aa)) is disordered. Residues 33 to 35 (GHR) form a beta-chain polymerization, binding distal domain of another fibrin region. Composition is skewed to basic and acidic residues over residues 35–45 (RPVDRRKEEPP) and 64–78 (AKVD…RKPP). 2 disulfides stabilise this stretch: cysteine 219–cysteine 304 and cysteine 229–cysteine 258. The 257-residue stretch at 220–476 (NIPVVSGKEC…RMSMKIRPVF (257 aa)) folds into the Fibrinogen C-terminal domain. Asparagine 382 carries N-linked (GlcNAc...) asparagine glycosylation. Residues cysteine 412 and cysteine 425 are joined by a disulfide bond.

As to quaternary structure, heterohexamer; disulfide linked. Contains 2 sets of 3 non-identical chains (alpha, beta and gamma). The 2 heterotrimers are in head to head conformation with the N-termini in a small central domain. In terms of processing, conversion of fibrinogen to fibrin is triggered by thrombin, which cleaves fibrinopeptides A and B from alpha and beta chains, and thus exposes the N-terminal polymerization sites responsible for the formation of the soft clot.

Its subcellular location is the secreted. Cleaved by the protease thrombin to yield monomers which, together with fibrinogen alpha (FGA) and fibrinogen gamma (FGG), polymerize to form an insoluble fibrin matrix. Fibrin has a major function in hemostasis as one of the primary components of blood clots. In addition, functions during the early stages of wound repair to stabilize the lesion and guide cell migration during re-epithelialization. Was originally thought to be essential for platelet aggregation, based on in vitro studies using anticoagulated blood. However subsequent studies have shown that it is not absolutely required for thrombus formation in vivo. Enhances expression of SELP in activated platelets. Maternal fibrinogen is essential for successful pregnancy. Fibrin deposition is also associated with infection, where it protects against IFNG-mediated hemorrhage. May also facilitate the antibacterial immune response via both innate and T-cell mediated pathways. This chain is Fibrinogen beta chain (Fgb), found in Rattus norvegicus (Rat).